A 235-amino-acid polypeptide reads, in one-letter code: Endonuclease V (235 aa).

Positions 47 and 115 each coordinate Mg(2+).

The protein belongs to the endonuclease V family. The cofactor is Mg(2+).

Its subcellular location is the cytoplasm. It catalyses the reaction Endonucleolytic cleavage at apurinic or apyrimidinic sites to products with a 5'-phosphate.. In terms of biological role, DNA repair enzyme involved in the repair of deaminated bases. Selectively cleaves double-stranded DNA at the second phosphodiester bond 3' to a deoxyinosine leaving behind the intact lesion on the nicked DNA. The sequence is that of Endonuclease V from Myxococcus xanthus (strain DK1622).